A 566-amino-acid chain; its full sequence is APC membrane recruitment protein 2 (566 aa).

Disordered stretches follow at residues 120-176, 192-237, 277-307, and 342-533; these read KKNG…PGLI, TQKP…SPCS, VTGC…GKKV, and MIPP…RTKI. Composition is skewed to basic and acidic residues over residues 123–134, 155–168, and 192–204; these read GKSENVRGEQAE, SKKD…KEGA, and TQKP…KSTE. Basic and acidic residues-rich tracts occupy residues 364–377 and 389–411; these read REVK…DRNA and YRKE…RNSD. Residues 464–476 show a composition bias toward low complexity; the sequence is PPLSHSHSKPLSP. 2 stretches are compositionally biased toward polar residues: residues 477-489 and 504-517; these read VTTS…ASSN and HTTN…SGSA.

The protein belongs to the Amer family.

Its subcellular location is the cell membrane. Negative regulator of the canonical Wnt signaling pathway involved in neuroectodermal patterning. Acts by specifically binding phosphatidylinositol 4,5-bisphosphate (PtdIns(4,5)P2), translocating to the cell membrane and interacting with key regulators of the canonical Wnt signaling pathway, such as components of the beta-catenin destruction complex. This chain is APC membrane recruitment protein 2 (amer2), found in Xenopus tropicalis (Western clawed frog).